Consider the following 350-residue polypeptide: Cobalt-precorrin-5B C(1)-methyltransferase (350 aa).

The protein belongs to the CbiD family.

The catalysed reaction is Co-precorrin-5B + S-adenosyl-L-methionine = Co-precorrin-6A + S-adenosyl-L-homocysteine. It participates in cofactor biosynthesis; adenosylcobalamin biosynthesis; cob(II)yrinate a,c-diamide from sirohydrochlorin (anaerobic route): step 6/10. In terms of biological role, catalyzes the methylation of C-1 in cobalt-precorrin-5B to form cobalt-precorrin-6A. The sequence is that of Cobalt-precorrin-5B C(1)-methyltransferase from Syntrophotalea carbinolica (strain DSM 2380 / NBRC 103641 / GraBd1) (Pelobacter carbinolicus).